The sequence spans 318 residues: NADH-ubiquinone oxidoreductase chain 1 (318 aa).

Transmembrane regions (helical) follow at residues Phe2–Leu22, Phe69–Leu89, Leu102–Ala122, Met146–Ala166, His171–Ala191, Leu222–Phe242, Glu253–Val273, and Leu294–Ile314.

The protein belongs to the complex I subunit 1 family.

Its subcellular location is the mitochondrion inner membrane. The enzyme catalyses a ubiquinone + NADH + 5 H(+)(in) = a ubiquinol + NAD(+) + 4 H(+)(out). Its function is as follows. Core subunit of the mitochondrial membrane respiratory chain NADH dehydrogenase (Complex I) that is believed to belong to the minimal assembly required for catalysis. Complex I functions in the transfer of electrons from NADH to the respiratory chain. The immediate electron acceptor for the enzyme is believed to be ubiquinone. This Mammuthus primigenius (Siberian woolly mammoth) protein is NADH-ubiquinone oxidoreductase chain 1 (MT-ND1).